The primary structure comprises 372 residues: Putative aminopeptidase SgcX (372 aa).

A divalent metal cation is bound by residues His-67 and Asp-180. Residue Glu-212 is the Proton acceptor of the active site. 3 residues coordinate a divalent metal cation: Glu-213, Asp-235, and His-329.

This sequence belongs to the peptidase M42 family. A divalent metal cation serves as cofactor.

This Salmonella typhimurium (strain LT2 / SGSC1412 / ATCC 700720) protein is Putative aminopeptidase SgcX (sgcX).